The sequence spans 531 residues: Putative heme-binding protein HQ_1094A (531 aa).

Position 177 (histidine 177) interacts with heme. The disordered stretch occupies residues alanine 269–glutamate 340. Residues glycine 271 to serine 281 are compositionally biased toward basic and acidic residues. A compositionally biased stretch (gly residues) spans glycine 284–alanine 306. Positions glycine 308 to serine 317 are enriched in basic and acidic residues. Low complexity predominate over residues arginine 318 to aspartate 338. An ABM domain is found at glycine 441 to phenylalanine 529.

The protein in the N-terminal section; belongs to the ChdC family.

This chain is Putative heme-binding protein HQ_1094A, found in Haloquadratum walsbyi (strain DSM 16790 / HBSQ001).